Consider the following 322-residue polypeptide: Putative integrase ORF3 (322 aa).

In terms of domain architecture, Integrase catalytic spans 153–322; it reads RGKLTDFKSI…SSKEMFLQNI (170 aa).

Belongs to the plectrovirus integrase ORF3 family.

This protein may encode an integrase, which is necessary for integration of the viral DNA into host genome. The protein is Putative integrase ORF3 of Spiroplasma virus SpV1-R8A2 B (SpV1).